Here is a 146-residue protein sequence, read N- to C-terminus: Large ribosomal subunit protein uL15 (146 aa).

The span at 1-13 (MKLHELKAAEGSR) shows a compositional bias: basic and acidic residues. Residues 1–61 (MKLHELKAAE…GGQTPLFRRM (61 aa)) are disordered. Gly residues-rich tracts occupy residues 23–35 (TSSG…GRGQ) and 42–52 (SGGGVRLGFEG).

Belongs to the universal ribosomal protein uL15 family. In terms of assembly, part of the 50S ribosomal subunit.

In terms of biological role, binds to the 23S rRNA. This chain is Large ribosomal subunit protein uL15, found in Streptococcus uberis (strain ATCC BAA-854 / 0140J).